Reading from the N-terminus, the 450-residue chain is UDP-N-acetylmuramoylalanine--D-glutamate ligase (450 aa).

Glycine 119–threonine 125 lines the ATP pocket.

It belongs to the MurCDEF family.

The protein resides in the cytoplasm. The enzyme catalyses UDP-N-acetyl-alpha-D-muramoyl-L-alanine + D-glutamate + ATP = UDP-N-acetyl-alpha-D-muramoyl-L-alanyl-D-glutamate + ADP + phosphate + H(+). The protein operates within cell wall biogenesis; peptidoglycan biosynthesis. In terms of biological role, cell wall formation. Catalyzes the addition of glutamate to the nucleotide precursor UDP-N-acetylmuramoyl-L-alanine (UMA). The chain is UDP-N-acetylmuramoylalanine--D-glutamate ligase from Bacillus cereus (strain ATCC 14579 / DSM 31 / CCUG 7414 / JCM 2152 / NBRC 15305 / NCIMB 9373 / NCTC 2599 / NRRL B-3711).